Consider the following 121-residue polypeptide: Large ribosomal subunit protein bL12 (121 aa).

It belongs to the bacterial ribosomal protein bL12 family. As to quaternary structure, homodimer. Part of the ribosomal stalk of the 50S ribosomal subunit. Forms a multimeric L10(L12)X complex, where L10 forms an elongated spine to which 2 to 4 L12 dimers bind in a sequential fashion. Binds GTP-bound translation factors.

Forms part of the ribosomal stalk which helps the ribosome interact with GTP-bound translation factors. Is thus essential for accurate translation. The chain is Large ribosomal subunit protein bL12 from Streptococcus pyogenes serotype M3 (strain ATCC BAA-595 / MGAS315).